The sequence spans 271 residues: Tryptophan synthase alpha chain (271 aa).

Catalysis depends on proton acceptor residues Glu-49 and Asp-60.

The protein belongs to the TrpA family. Tetramer of two alpha and two beta chains.

It catalyses the reaction (1S,2R)-1-C-(indol-3-yl)glycerol 3-phosphate + L-serine = D-glyceraldehyde 3-phosphate + L-tryptophan + H2O. The protein operates within amino-acid biosynthesis; L-tryptophan biosynthesis; L-tryptophan from chorismate: step 5/5. Its function is as follows. The alpha subunit is responsible for the aldol cleavage of indoleglycerol phosphate to indole and glyceraldehyde 3-phosphate. The sequence is that of Tryptophan synthase alpha chain from Burkholderia multivorans (strain ATCC 17616 / 249).